Consider the following 142-residue polypeptide: Gonadotropin subunit beta-2 (142 aa).

The signal sequence occupies residues 1–24; the sequence is MLGLHVGTLMISLFLCILLEPVEG. 6 disulfides stabilise this stretch: Cys-30-Cys-78, Cys-44-Cys-93, Cys-47-Cys-131, Cys-55-Cys-109, Cys-59-Cys-111, and Cys-114-Cys-121. Asn-34 carries an N-linked (GlcNAc...) asparagine glycan.

This sequence belongs to the glycoprotein hormones subunit beta family. In terms of assembly, heterodimer of an alpha and a beta chain.

The protein resides in the secreted. Involved in gametogenesis and steroidogenesis. In Coregonus autumnalis (Arctic cisco), this protein is Gonadotropin subunit beta-2 (cgbb).